The following is a 344-amino-acid chain: 3,4-dihydroxy-2-butanone 4-phosphate synthase (344 aa).

The interval 1-202 (MILRRVTEAL…VSDLISYRLE (202 aa)) is DHBP synthase. D-ribulose 5-phosphate contacts are provided by residues 27–28 (RE), Asp-32, 139–143 (RTGHT), and Glu-163. Position 28 (Glu-28) interacts with Mg(2+). His-142 serves as a coordination point for Mg(2+). The interval 203 to 344 (NESLLKMFCQ…GLKLVETISL (142 aa)) is GTP cyclohydrolase II-like.

It in the N-terminal section; belongs to the DHBP synthase family. In the C-terminal section; belongs to the GTP cyclohydrolase II family. Requires Mg(2+) as cofactor. The cofactor is Mn(2+).

It carries out the reaction D-ribulose 5-phosphate = (2S)-2-hydroxy-3-oxobutyl phosphate + formate + H(+). It functions in the pathway cofactor biosynthesis; riboflavin biosynthesis; 2-hydroxy-3-oxobutyl phosphate from D-ribulose 5-phosphate: step 1/1. In terms of biological role, catalyzes the conversion of D-ribulose 5-phosphate to formate and 3,4-dihydroxy-2-butanone 4-phosphate. This chain is 3,4-dihydroxy-2-butanone 4-phosphate synthase (ribB), found in Helicobacter pylori (strain J99 / ATCC 700824) (Campylobacter pylori J99).